The following is a 279-amino-acid chain: 32 kDa beta-galactoside-binding lectin (279 aa).

Galectin domains follow at residues 13–144 and 152–279; these read YRSV…VHWG and YESG…IQIQ. A beta-D-galactoside is bound at residue 213 to 219; it reads WGNEERE.

Post-translationally, the N-terminus is blocked.

Functionally, binds galactose. The sequence is that of 32 kDa beta-galactoside-binding lectin (lec-1) from Caenorhabditis elegans.